Here is a 99-residue protein sequence, read N- to C-terminus: Integration host factor subunit alpha (99 aa).

The interval 49–72 (FGNFDLRDKNQRPGRNPKTGEDIP) is disordered.

The protein belongs to the bacterial histone-like protein family. Heterodimer of an alpha and a beta chain.

Functionally, this protein is one of the two subunits of integration host factor, a specific DNA-binding protein that functions in genetic recombination as well as in transcriptional and translational control. This is Integration host factor subunit alpha from Escherichia coli O9:H4 (strain HS).